We begin with the raw amino-acid sequence, 102 residues long: Small ubiquitin-related modifier 1 (102 aa).

The region spanning Asp21–Gly98 is the Ubiquitin-like domain. A Glycyl lysine isopeptide (Gly-Lys) (interchain with K-? in acceptor proteins) cross-link involves residue Gly98. Residues His99–Ile102 constitute a propeptide that is removed on maturation.

It belongs to the ubiquitin family. SUMO subfamily. As to quaternary structure, interacts with sae2, ube2i, ranbp2, pias1 and pias2. Interacts with sox9 and sox10. Covalently attached to a number of proteins. In terms of processing, cleavage of precursor form by a sentrin-specific protease is necessary for function.

It localises to the nucleus membrane. The protein resides in the nucleus speckle. It is found in the cytoplasm. Its subcellular location is the nucleus. The protein localises to the PML body. It localises to the cell membrane. In terms of biological role, ubiquitin-like protein that can be covalently attached to proteins as a monomer or a lysine-linked polymer. Covalent attachment via an isopeptide bond to its substrates requires prior activation by the E1 complex sae1-sae2 and linkage to the E2 enzyme ube2i. This post-translational modification on lysine residues of proteins plays a crucial role in a number of cellular processes such as nuclear transport, DNA replication and repair, mitosis and signal transduction. Polymeric sumo1 chains are also susceptible to polyubiquitination which functions as a signal for proteasomal degradation of modified proteins. The sequence is that of Small ubiquitin-related modifier 1 (sumo1) from Xenopus tropicalis (Western clawed frog).